A 512-amino-acid polypeptide reads, in one-letter code: Oxalate--CoA ligase (512 aa).

An ATP-binding site is contributed by 168–179; the sequence is HTSGTTGRPKVV. A phosphoserine mark is found at Ser-283 and Ser-284. The FACS motif lies at 381 to 429; sequence DRFFRTGDEGKLDKDGYVFITGRIKELVNRGGEKISPAEIDAVLMQHPD. A Microbody targeting signal motif is present at residues 510–512; that stretch reads AKL.

Belongs to the ATP-dependent AMP-binding enzyme family.

Its subcellular location is the peroxisome matrix. The protein localises to the peroxisome membrane. The catalysed reaction is oxalate + ATP + CoA = oxalyl-CoA + AMP + diphosphate. Its function is as follows. Catalyzes the first step in a degradation pathway of oxalate to CO(2) to protect the cell against the harmful effects of oxalate derived from endogenous processes or an environmental sources. In Schizosaccharomyces pombe (strain 972 / ATCC 24843) (Fission yeast), this protein is Oxalate--CoA ligase (pcs60).